Reading from the N-terminus, the 519-residue chain is Cytochrome P450 monooxygenase AtmP (519 aa).

Residues 21–41 traverse the membrane as a helical segment; sequence SMLLVVTLVILFLWFIIPSPV. Cysteine 457 is a heme binding site.

The protein belongs to the cytochrome P450 family. It depends on heme as a cofactor.

It is found in the membrane. Its pathway is secondary metabolite biosynthesis. Cytochrome P450 monooxygenase; part of the ATM2 gene cluster that mediates the biosynthesis of aflatrem, a tremorgenic mycotoxin with acute neurotoxic effects. Synthesis of geranylgeranyl diphosphate (GGPP) by AtmG (a GGPP synthase) precedes condensation of GGPP with indole 3-glycerol phosphate, followed by epoxidation and cyclization by AtmM (a FAD-dependent monooxygenase) and AtmC (a prenyltransferase) to produce paspaline. AtmB is also essential for paspaline production, but its exact role has not been identified yet. AtmP, a cytochrome P450 monooxygenase, subsequently converts paspaline to 13-desoxypaxilline via PC-M6 by removal of the C-30 methyl group and oxidation at C-10. AtmQ, a cytochrome P450 monooxygenase, then catalyzes the oxidation of 13-desoxypaxilline, first at C-7 to produce paspalicine and then at C-13 to form paspalinine. Finally, AtmD prenylates paspalinine to form aflatrem. The protein is Cytochrome P450 monooxygenase AtmP of Aspergillus flavus.